The chain runs to 85 residues: Large ribosomal subunit protein bL27 (85 aa).

A disordered region spans residues 1 to 20; it reads MAHKKAAGSSRNGRDSNPKM.

Belongs to the bacterial ribosomal protein bL27 family.

This chain is Large ribosomal subunit protein bL27, found in Psychrobacter arcticus (strain DSM 17307 / VKM B-2377 / 273-4).